Consider the following 146-residue polypeptide: Hemoglobin subunit beta-1 (146 aa).

One can recognise a Globin domain in the interval 2 to 146 (KWSDKERAVI…VVSALGKQYC (145 aa)). Heme b contacts are provided by histidine 63 and histidine 92.

The protein belongs to the globin family. In terms of assembly, hb1 is a heterotetramer of two alpha-1 chains and two beta-1 chains; Hb2 is a heterotetramer of two alpha-2 chains and two beta-1 chains. As to expression, red blood cells.

Functionally, involved in oxygen transport from gills to the various peripheral tissues. This chain is Hemoglobin subunit beta-1 (hbb1), found in Anarhichas minor (Arctic spotted wolffish).